A 169-amino-acid chain; its full sequence is Peptide deformylase (169 aa).

Cysteine 91 and histidine 133 together coordinate Fe cation. Glutamate 134 is a catalytic residue. Position 137 (histidine 137) interacts with Fe cation.

Belongs to the polypeptide deformylase family. Fe(2+) serves as cofactor.

It catalyses the reaction N-terminal N-formyl-L-methionyl-[peptide] + H2O = N-terminal L-methionyl-[peptide] + formate. Functionally, removes the formyl group from the N-terminal Met of newly synthesized proteins. Requires at least a dipeptide for an efficient rate of reaction. N-terminal L-methionine is a prerequisite for activity but the enzyme has broad specificity at other positions. This Haemophilus influenzae (strain 86-028NP) protein is Peptide deformylase.